A 389-amino-acid chain; its full sequence is Cellobiose 2-epimerase (389 aa).

This sequence belongs to the cellobiose 2-epimerase family.

It carries out the reaction D-cellobiose = beta-D-glucosyl-(1-&gt;4)-D-mannopyranose. Its function is as follows. Catalyzes the reversible epimerization of cellobiose to 4-O-beta-D-glucopyranosyl-D-mannose (Glc-Man). This chain is Cellobiose 2-epimerase, found in Ruminococcus albus (strain ATCC 27210 / DSM 20455 / JCM 14654 / NCDO 2250 / 7).